The sequence spans 299 residues: Putative KilA-N domain-containing protein R879 (299 aa).

The KilA-N domain maps to 1–75; it reads MKSDNGILMS…IKVSEIVLSY (75 aa). Residues 76 to 150 are a coiled coil; it reads HAKEAIKEKE…DKKINELLSK (75 aa).

The sequence is that of Putative KilA-N domain-containing protein R879 from Acanthamoeba polyphaga mimivirus (APMV).